Consider the following 780-residue polypeptide: MATSNLLKNKGSLQFEDKWDFMRPIVLKLLRQESVTKQQWFDLFSDVHAVCLWDDKGSSKIHQALKEDILEFIKQAQARVLSHQDDTALLKAYIVEWRKFFTQCDILPKPFCQLEVTLLGKQSSNKKSNMEDSIVRKLMLDTWNESIFSNIKNRLQDSAMKLVHAERLGEAFDSQLVIGVRESYVNLCSNPEDKLQIYRDNFEKAYLDSTERFYRTQAPSYLQQNGVQNYMKYADAKLKEEEKRALRYLETRRECNSVEALMECCVNALVTSFKETILAECQGMIKRNETEKLHLMFSLMDKVPGGIEPMLKDLEEHIISAGLADMVAAAETITTDSEKYVEQLLTLFNRFSKLVKEAFQDDPRFLTARDKAYKAVVNDATIFKLELPLKQKGVGLKTQPESKCPELLANYCDMLLRKTPLSKKLTSEEIEAKLKEVLLVLKYVQNKDVFMRYHKAHLTRRLILDISADSEIEENMVEWLREVGMPADYVNKLARMFQDIKVSEDLNQAFKEMHKNNKLALPADSVNIKILNAGAWSRSSEKVFVSLPTELEDLIPEVEEFYKKNHSGRKLHWHHLMSNGIITFKNEVGQYDLEVTTFQLAVLFAWNQRPREKISFENLKLATELPDAELRRTLWSLVAFPKLKRQVLLYDPQVNSPKDFTEGTLFSVNQDFSLIKNAKVQKRGKINLIGRLQLTTERMREEENEGIVQLRILRTQEAIIQIMKMRKKISNAQLQTELVEILKNMFLPQKKMIKEQIEWLIEHKYIRRDEADINTFIYMA.

Residue S34 is modified to Phosphoserine. T210 is modified (phosphothreonine). The 62-residue stretch at 711–772 folds into the Cullin neddylation domain; sequence RILRTQEAII…HKYIRRDEAD (62 aa). K724 participates in a covalent cross-link: Glycyl lysine isopeptide (Lys-Gly) (interchain with G-Cter in NEDD8).

It belongs to the cullin family. As to quaternary structure, component of multiple cullin-5-RING E3 ubiquitin-protein ligase complexes (ECS complexes, also named CRL5 complexes) formed of CUL5, Elongin BC (ELOB and ELOC), RNF7/RBX2 and a variable SOCS box domain-containing protein as substrate-specific recognition component. CUL5-containing ECS complexes specifically contain RNF7/RBX2, and not RBX1, as catalytic subunit. Component of the ECS(ASB2) complex with the substrate recognition component ASB2. Component of the ECS(ASB6) complex with the substrate recognition component ASB6. Component of the ECS(ASB7) complex with the substrate recognition component ASB7. Component of the ECS(ASB9) complex with the substrate recognition component ASB9. Component of the ECS(ASB11) complex with the substrate recognition component ASB11. Component of the ECS(ASB12) complex with the substrate recognition component ASB12. Component of the ECS(LRRC41) complex with the substrate recognition component LRRC41. Component of the ECS(SOCS1) complex with the substrate recognition component SOCS1. Component of the ECS(SOCS2) complex with the substrate recognition component SOCS2. Component of the ECS(WSB1) complex with the substrate recognition subunit WSB1. Component of the ECS(SOCS3) complex with the substrate recognition component SOCS3. Component of the ECS(SOCS7) complex with the substrate recognition component SOCS7. Component of the ECS(SPSB1) complex with the substrate recognition component SPSB1. Component of the ECS(SPSB3) complex with the substrate recognition component SPSB3. Component of the ECS(SPSB2) complex with the substrate recognition component SPSB2. Component of the ECS(SPSB4) complex with the substrate recognition component SPSB4. Component of the ECS(RAB40) complex with the substrate recognition subunit RAB40A, RAB40B or RAB40C. Component of the ECS(KLHDC1) complex with the substrate recognition component KLHDC1. Component of the ECS(PCMTD1) complex with the substrate recognition subunit PCMTD1. May also form complexes containing RBX1 and ELOA or VHL; additional evidence is however required to confirm this result in vivo. Interacts (when neddylated) with ARIH2; leading to activate the E3 ligase activity of ARIH2. Interacts with ERCC6; the interaction is induced by DNA damaging agents or inhibitors of RNA polymerase II elongation. Interacts with ELOA (via the BC-box). Interacts (unneddylated form) with DCUN1D1, DCUN1D2, DCUN1D3, DCUN1D4 and DCUN1D5; these interactions promote the cullin neddylation. Post-translationally, neddylated; which enhances the ubiquitination activity of ECS complexes and prevents binding of the inhibitor CAND1. Deneddylated via its interaction with the COP9 signalosome (CSN).

The protein resides in the nucleus. It functions in the pathway protein modification; protein ubiquitination. Core component of multiple cullin-5-RING E3 ubiquitin-protein ligase complexes (ECS complexes, also named CRL5 complexes), which mediate the ubiquitination and subsequent proteasomal degradation of target proteins. Acts a scaffold protein that contributes to catalysis through positioning of the substrate and the ubiquitin-conjugating enzyme. The functional specificity of the E3 ubiquitin-protein ligase complex depends on the variable SOCS box-containing substrate recognition component. Acts as a key regulator of neuron positioning during cortex development: component of various SOCS-containing ECS complexes, such as the ECS(SOCS7) complex, that regulate reelin signaling by mediating ubiquitination and degradation of DAB1. ECS(SOCS1) seems to direct ubiquitination of JAK2. The ECS(SOCS2) complex mediates the ubiquitination and subsequent proteasomal degradation of phosphorylated EPOR and GHR. The ECS(SPSB3) complex catalyzes ubiquitination of nuclear CGAS. ECS(KLHDC1) complex is part of the DesCEND (destruction via C-end degrons) pathway and mediates ubiquitination and degradation of truncated SELENOS selenoprotein produced by failed UGA/Sec decoding, which ends with a glycine. The ECS(ASB9) complex mediates ubiquitination and degradation of CKB. As part of some ECS complex, promotes 'Lys-11'-linked ubiquitination and degradation of BTRC. As part of a multisubunit ECS complex, polyubiquitinates monoubiquitinated POLR2A. As part of the ECS(RAB40C) complex, mediates ANKRD28 ubiquitination and degradation, thereby regulating protein phosphatase 6 (PP6) complex activity and focal adhesion assembly during cell migration. As part of the ECS(RAB40A) complex, mediates RHOU 'Lys-48'-linked ubiquitination and degradation, thus inhibiting focal adhesion disassembly during cell migration. As part of the ECS(RAB40B) complex, mediates LIMA1/EPLIN and RAP2 ubiquitination, thereby regulating actin cytoskeleton dynamics and stress fiber formation during cell migration. May form a cell surface vasopressin receptor. The sequence is that of Cullin-5 from Rattus norvegicus (Rat).